Here is an 87-residue protein sequence, read N- to C-terminus: U3-theraphotoxin-Hhn1j (87 aa).

A signal peptide spans 1–24; that stretch reads MVNMKASMFLTFAGLVLLFVVCYA. The propeptide occupies 25-52; the sequence is SESEEKEFPKEMLSSIFAVDNDFKQEER. 3 cysteine pairs are disulfide-bonded: C54-C67, C61-C72, and C66-C79.

The protein belongs to the neurotoxin 10 (Hwtx-1) family. 51 (Hntx-8) subfamily. Hntx-8 sub-subfamily. Expressed by the venom gland.

Its subcellular location is the secreted. In terms of biological role, ion channel inhibitor. This Cyriopagopus hainanus (Chinese bird spider) protein is U3-theraphotoxin-Hhn1j.